The sequence spans 270 residues: Putative pyruvate, phosphate dikinase regulatory protein 2 (270 aa).

151–158 (GVSRTSKT) contributes to the ADP binding site.

It belongs to the pyruvate, phosphate/water dikinase regulatory protein family. PDRP subfamily.

The enzyme catalyses N(tele)-phospho-L-histidyl/L-threonyl-[pyruvate, phosphate dikinase] + ADP = N(tele)-phospho-L-histidyl/O-phospho-L-threonyl-[pyruvate, phosphate dikinase] + AMP + H(+). The catalysed reaction is N(tele)-phospho-L-histidyl/O-phospho-L-threonyl-[pyruvate, phosphate dikinase] + phosphate + H(+) = N(tele)-phospho-L-histidyl/L-threonyl-[pyruvate, phosphate dikinase] + diphosphate. In terms of biological role, bifunctional serine/threonine kinase and phosphorylase involved in the regulation of the pyruvate, phosphate dikinase (PPDK) by catalyzing its phosphorylation/dephosphorylation. The protein is Putative pyruvate, phosphate dikinase regulatory protein 2 of Listeria monocytogenes serovar 1/2a (strain ATCC BAA-679 / EGD-e).